The sequence spans 186 residues: Ribosome-recycling factor (186 aa).

The protein belongs to the RRF family.

Its subcellular location is the cytoplasm. Its function is as follows. Responsible for the release of ribosomes from messenger RNA at the termination of protein biosynthesis. May increase the efficiency of translation by recycling ribosomes from one round of translation to another. The chain is Ribosome-recycling factor from Chlorobium phaeobacteroides (strain DSM 266 / SMG 266 / 2430).